A 461-amino-acid polypeptide reads, in one-letter code: Cysteine--tRNA ligase (461 aa).

C28 serves as a coordination point for Zn(2+). A 'HIGH' region motif is present at residues 30-40; the sequence is ITVYDLCHIGH. Zn(2+) contacts are provided by C209, H234, and E238. The short motif at 266 to 270 is the 'KMSKS' region element; it reads KMSKS. Residue K269 participates in ATP binding.

The protein belongs to the class-I aminoacyl-tRNA synthetase family. Monomer. It depends on Zn(2+) as a cofactor.

It is found in the cytoplasm. The enzyme catalyses tRNA(Cys) + L-cysteine + ATP = L-cysteinyl-tRNA(Cys) + AMP + diphosphate. The protein is Cysteine--tRNA ligase of Escherichia coli O157:H7.